The sequence spans 256 residues: Imidazole glycerol phosphate synthase subunit HisF (256 aa).

Catalysis depends on residues Asp-11 and Asp-130.

This sequence belongs to the HisA/HisF family. As to quaternary structure, heterodimer of HisH and HisF.

The protein localises to the cytoplasm. It catalyses the reaction 5-[(5-phospho-1-deoxy-D-ribulos-1-ylimino)methylamino]-1-(5-phospho-beta-D-ribosyl)imidazole-4-carboxamide + L-glutamine = D-erythro-1-(imidazol-4-yl)glycerol 3-phosphate + 5-amino-1-(5-phospho-beta-D-ribosyl)imidazole-4-carboxamide + L-glutamate + H(+). The protein operates within amino-acid biosynthesis; L-histidine biosynthesis; L-histidine from 5-phospho-alpha-D-ribose 1-diphosphate: step 5/9. In terms of biological role, IGPS catalyzes the conversion of PRFAR and glutamine to IGP, AICAR and glutamate. The HisF subunit catalyzes the cyclization activity that produces IGP and AICAR from PRFAR using the ammonia provided by the HisH subunit. The chain is Imidazole glycerol phosphate synthase subunit HisF from Prochlorococcus marinus (strain AS9601).